The sequence spans 230 residues: MREQRPIIALDFPDFDTLKDFLNQFPKDEALYVKIGMELYYAVGPEIVRYVKSLGHSVFLDLKLHDIPNTVKSTMKVLAKMGIDMTTVQAAGGVEMLEAAREGLGDDPILIAVTQLTSTSEEQMREDQNIQTTLTESVLHYAKRTALAKLDGVVCSAHEVEAIKSVTSKDFLCLTPGIRPKGTDIGDQKRVMTPQEAKAIGSDFIVVGRPITQAPDPLAAYHAIKADWNA.

Substrate-binding positions include D11, K34, 61–70, T117, R179, Q188, G208, and R209; that span reads DLKLHDIPNT. K63 acts as the Proton donor in catalysis.

Belongs to the OMP decarboxylase family. Type 1 subfamily. Homodimer.

It catalyses the reaction orotidine 5'-phosphate + H(+) = UMP + CO2. It functions in the pathway pyrimidine metabolism; UMP biosynthesis via de novo pathway; UMP from orotate: step 2/2. Functionally, catalyzes the decarboxylation of orotidine 5'-monophosphate (OMP) to uridine 5'-monophosphate (UMP). In Streptococcus uberis (strain ATCC BAA-854 / 0140J), this protein is Orotidine 5'-phosphate decarboxylase.